Consider the following 611-residue polypeptide: tRNA uridine 5-carboxymethylaminomethyl modification enzyme MnmG (611 aa).

Residues 8 to 13 (GAGHAG), Val120, and Ser175 each bind FAD. 268–282 (GPRYCPSIEDKIVRF) contributes to the NAD(+) binding site. Gln365 contacts FAD.

Belongs to the MnmG family. Homodimer. Heterotetramer of two MnmE and two MnmG subunits. FAD serves as cofactor.

It is found in the cytoplasm. Functionally, NAD-binding protein involved in the addition of a carboxymethylaminomethyl (cmnm) group at the wobble position (U34) of certain tRNAs, forming tRNA-cmnm(5)s(2)U34. This chain is tRNA uridine 5-carboxymethylaminomethyl modification enzyme MnmG, found in Mycoplasmoides gallisepticum (strain R(low / passage 15 / clone 2)) (Mycoplasma gallisepticum).